The sequence spans 1510 residues: ABC transporter C family MRP4 (1510 aa).

12 helical membrane-spanning segments follow: residues 12 to 32 (EAVAATAHAALLALAALLLLL), 55 to 75 (PAVVVGDGAGGALAAATAGAW), 78 to 98 (AVLASCAYALLSQVAVLSYEV), 109 to 129 (ALLLPAVQAVSWAALLALALQ), 138 to 158 (FPALVRLWWVVSFALCVVIAY), 177 to 197 (MVANFASVPALGFLCLVGVMG), 319 to 339 (TFAAVNTIVSYVGPYLISYFV), 342 to 362 (LSGNIAFPHEGYILASIFFVA), 373 to 393 (WYLGVDIMGIHVKSGLTAMVY), 427 to 447 (AWYFHDIWMLPLQIILALAIL), 453 to 473 (IAMVSTLVATVLSIAASVPVA), and 540 to 560 (FVFWSSPIFVAVITFGTCILL). One can recognise an ABC transmembrane type-1 1 domain in the interval 320–595 (FAAVNTIVSY…FPDLISMMAQ (276 aa)). An ABC transporter 1 domain is found at 629 to 852 (VDIKDGAFSW…GTDFNALVSA (224 aa)). 664–671 (GVIGSGKS) contributes to the ATP binding site. A disordered region spans residues 889 to 925 (LKNKMCENGQPSNTRGIKEKKKKEERKKKRTVQEEER). Positions 906 to 918 (KEKKKKEERKKKR) are enriched in basic residues. A run of 6 helical transmembrane segments spans residues 945-965 (GTLIPLIILAQTMFQVLQIAS), 985-1005 (SVVLLVVYMSLAFGSSLFVFM), 1060-1082 (IAFRLGGFASTTIQLLGIVAVMS), 1086-1108 (WQVLILIVPMAVACMWMQRYYIA), 1154-1174 (LLDCFARPLFSSLAAIEWLCL), and 1179-1199 (LSTFVFAFCMAILVSFPPGTI). The ABC transmembrane type-1 2 domain occupies 950 to 1220 (LIILAQTMFQ…GLNLNARMSR (271 aa)). The 235-residue stretch at 1267–1501 (IELIDLKVRY…KSSMFIQLVS (235 aa)) folds into the ABC transporter 2 domain. An ATP-binding site is contributed by 1301 to 1308 (GRTGSGKS).

The protein belongs to the ABC transporter superfamily. ABCC family. Conjugate transporter (TC 3.A.1.208) subfamily. As to expression, expressed in roots, leaves, stalks, tassels, silks, developing seeds and developing embryos.

It localises to the membrane. ABC transporter that may affect phytic acid transport and compartmentalization. May function directly or indirectly in removing phytic acid from the cytosol or in vesicle trafficking. Required for phytic acid accumulation in developing seeds. Phytic acid is the primary storage form of phosphorus in cereal grains and other plant seeds. This is ABC transporter C family MRP4 from Zea mays (Maize).